The sequence spans 433 residues: 5-methylthioadenosine/S-adenosylhomocysteine deaminase (433 aa).

Positions 67 and 69 each coordinate Zn(2+). Positions 96, 148, and 187 each coordinate substrate. Residue histidine 214 participates in Zn(2+) binding. Substrate is bound by residues glutamate 217 and aspartate 302. Aspartate 302 contributes to the Zn(2+) binding site.

This sequence belongs to the metallo-dependent hydrolases superfamily. MTA/SAH deaminase family. It depends on Zn(2+) as a cofactor.

It catalyses the reaction S-adenosyl-L-homocysteine + H2O + H(+) = S-inosyl-L-homocysteine + NH4(+). The catalysed reaction is S-methyl-5'-thioadenosine + H2O + H(+) = S-methyl-5'-thioinosine + NH4(+). Its function is as follows. Catalyzes the deamination of 5-methylthioadenosine and S-adenosyl-L-homocysteine into 5-methylthioinosine and S-inosyl-L-homocysteine, respectively. Is also able to deaminate adenosine. In Carboxydothermus hydrogenoformans (strain ATCC BAA-161 / DSM 6008 / Z-2901), this protein is 5-methylthioadenosine/S-adenosylhomocysteine deaminase.